Here is a 570-residue protein sequence, read N- to C-terminus: Hydroxylamine reductase (570 aa).

Residues Cys5, Cys8, Cys17, and Cys23 each contribute to the [4Fe-4S] cluster site. Hybrid [4Fe-2O-2S] cluster-binding residues include His266, Glu290, Cys334, Cys425, Cys453, Cys478, Glu513, and Lys515. Cys425 is modified (cysteine persulfide).

The protein belongs to the HCP family. [4Fe-4S] cluster is required as a cofactor. Hybrid [4Fe-2O-2S] cluster serves as cofactor.

The protein resides in the cytoplasm. It catalyses the reaction A + NH4(+) + H2O = hydroxylamine + AH2 + H(+). In terms of biological role, catalyzes the reduction of hydroxylamine to form NH(3) and H(2)O. This Clostridium botulinum (strain Loch Maree / Type A3) protein is Hydroxylamine reductase.